A 289-amino-acid chain; its full sequence is Rhodopsin (289 aa).

The Extracellular segment spans residues Tyr1 to Ala7. The helical transmembrane segment at Tyr8–Val32 threads the bilayer. The Cytoplasmic segment spans residues Thr33–Asn44. The helical transmembrane segment at Tyr45–Tyr67 threads the bilayer. Topologically, residues Thr68–Cys81 are extracellular. A disulfide bridge connects residues Cys81 and Cys158. Residues Asn82–Ile104 form a helical membrane-spanning segment. The 'Ionic lock' involved in activated form stabilization signature appears at Glu105–Trp107. Topologically, residues Glu105–His123 are cytoplasmic. Residues Ala124–Val144 traverse the membrane as a helical segment. Topologically, residues Gly145 to Ser173 are extracellular. The chain crosses the membrane as a helical span at residues Phe174 to Gly195. The Cytoplasmic segment spans residues Arg196–Arg223. The helical transmembrane segment at Met224–Trp245 threads the bilayer. The Extracellular segment spans residues Ile246–Ile257. The helical transmembrane segment at Phe258–Cys279 threads the bilayer. Lys267 is modified (N6-(retinylidene)lysine). At Met280–Ile289 the chain is on the cytoplasmic side.

Belongs to the G-protein coupled receptor 1 family. Opsin subfamily. In terms of processing, phosphorylated on some or all of the serine and threonine residues present in the C-terminal region. Post-translationally, contains one covalently linked retinal chromophore.

Its subcellular location is the membrane. The protein resides in the cell projection. It localises to the cilium. It is found in the photoreceptor outer segment. In terms of biological role, photoreceptor required for image-forming vision at low light intensity. While most salt water fish species use retinal as chromophore, most freshwater fish use 3-dehydroretinal, or a mixture of retinal and 3-dehydroretinal. Light-induced isomerization of 11-cis to all-trans retinal triggers a conformational change that activates signaling via G-proteins. Subsequent receptor phosphorylation mediates displacement of the bound G-protein alpha subunit by arrestin and terminates signaling. This is Rhodopsin (rho) from Procottus jeittelesii (Red sculpin).